A 325-amino-acid polypeptide reads, in one-letter code: UPF0285 protein Mbar_A0208 (325 aa).

Belongs to the UPF0285 family.

The polypeptide is UPF0285 protein Mbar_A0208 (Methanosarcina barkeri (strain Fusaro / DSM 804)).